Consider the following 35-residue polypeptide: Cytochrome b6-f complex subunit 7 (35 aa).

Residues 9-27 (AGLSIVLTLVGVALGYGIL) form a helical membrane-spanning segment.

It belongs to the PetM family. In terms of assembly, the 4 large subunits of the cytochrome b6-f complex are cytochrome b6, subunit IV (17 kDa polypeptide, PetD), cytochrome f and the Rieske protein, while the 4 small subunits are PetG, PetL, PetM and PetN. The complex functions as a dimer.

The protein resides in the cellular thylakoid membrane. Its function is as follows. Component of the cytochrome b6-f complex, which mediates electron transfer between photosystem II (PSII) and photosystem I (PSI), cyclic electron flow around PSI, and state transitions. This chain is Cytochrome b6-f complex subunit 7, found in Synechococcus sp. (strain JA-3-3Ab) (Cyanobacteria bacterium Yellowstone A-Prime).